Consider the following 743-residue polypeptide: Glycerol-3-phosphate O-acyltransferase 2 (743 aa).

The Lumenal portion of the chain corresponds to M1–N34. A helical transmembrane segment spans residues I35–F55. The Cytoplasmic portion of the chain corresponds to R56–V442. Residues T443–L457 traverse the membrane as a helical segment. Position 458 (S458) is a topological domain, lumenal. Residues L459–R473 form a helical membrane-spanning segment. At V474–K501 the chain is on the cytoplasmic side. Residues L502–I522 form a helical membrane-spanning segment. Topologically, residues L523–R531 are lumenal. A helical membrane pass occupies residues I532–F552. Residues T553–E743 are Cytoplasmic-facing. Phosphoserine occurs at positions 632, 637, 647, 651, 654, 657, 664, 668, and 671. Residue T673 is modified to Phosphothreonine. Residues K682–E743 form a disordered region. S688 is subject to Phosphoserine. Acidic residues predominate over residues E691–D700. T692 bears the Phosphothreonine mark. S693 bears the Phosphoserine mark.

It belongs to the GPAT/DAPAT family. Phosphorylated at a conserved motif involving Ser-664, Ser-668 and Ser-671. This phosphorylation plays a critical role for efficient TAG mobilization. Phosphorylation deficiency at this motif increases the enzyme activity and consequently induces de novo formation of phosphatidic acid.

It is found in the lipid droplet. It localises to the endoplasmic reticulum membrane. The catalysed reaction is sn-glycerol 3-phosphate + an acyl-CoA = a 1-acyl-sn-glycero-3-phosphate + CoA. It catalyses the reaction dihydroxyacetone phosphate + an acyl-CoA = a 1-acylglycerone 3-phosphate + CoA. It carries out the reaction sn-glycerol 3-phosphate + hexadecanoyl-CoA = 1-hexadecanoyl-sn-glycero-3-phosphate + CoA. The enzyme catalyses (9Z)-hexadecenoyl-CoA + sn-glycerol 3-phosphate = 1-(9Z-hexadecenoyl)-sn-glycero-3-phosphate + CoA. The catalysed reaction is sn-glycerol 3-phosphate + octadecanoyl-CoA = 1-octadecanoyl-sn-glycero-3-phosphate + CoA. It catalyses the reaction sn-glycerol 3-phosphate + (9Z)-octadecenoyl-CoA = 1-(9Z-octadecenoyl)-sn-glycero-3-phosphate + CoA. The protein operates within phospholipid metabolism; CDP-diacylglycerol biosynthesis; CDP-diacylglycerol from sn-glycerol 3-phosphate: step 1/3. Dual substrate-specific glycerol-3-phosphate/dihydroxyacetone phosphate sn-1 acyltransferase, catalyzing the first and committed reaction in the de novo synthesis of glycerophospholipids and triacylglycerols (TAGs). Can use both Gly-3-P and dihydroxyacetone phosphate with similar efficiencies and has a broad fatty acyl-CoA specificity profile. Transfers a fatty acid from fatty acyl-CoA to the sn-1 position of glycerol-3-phosphate to produce lysophosphatidic acid (LysoPA). These lipids not only are precursors of glycerolipids, but also are dynamic components of signal transduction systems that control cell physiology. This Saccharomyces cerevisiae (strain ATCC 204508 / S288c) (Baker's yeast) protein is Glycerol-3-phosphate O-acyltransferase 2 (GPT2).